Reading from the N-terminus, the 378-residue chain is Probable pectin lyase A (378 aa).

The N-terminal stretch at 1-18 is a signal peptide; that stretch reads MKYASFLALVGFITSTSA. Cystine bridges form between C81/C100 and C90/C224. Residue R254 is part of the active site. C321 and C329 are oxidised to a cystine.

It belongs to the polysaccharide lyase 1 family.

It is found in the secreted. The catalysed reaction is Eliminative cleavage of (1-&gt;4)-alpha-D-galacturonan methyl ester to give oligosaccharides with 4-deoxy-6-O-methyl-alpha-D-galact-4-enuronosyl groups at their non-reducing ends.. Pectinolytic enzymes consist of four classes of enzymes: pectin lyase, polygalacturonase, pectin methylesterase and rhamnogalacturonase. Among pectinolytic enzymes, pectin lyase is the most important in depolymerization of pectin, since it cleaves internal glycosidic bonds of highly methylated pectins. The sequence is that of Probable pectin lyase A (pelA) from Aspergillus clavatus (strain ATCC 1007 / CBS 513.65 / DSM 816 / NCTC 3887 / NRRL 1 / QM 1276 / 107).